The following is a 2513-amino-acid chain: Highly reducing polyketide synthase ACRTS2 (2513 aa).

The 426-residue stretch at 4-429 (DTPVAIIGVS…GSSSAVIIDR (426 aa)) folds into the Ketosynthase family 3 (KS3) domain. Residues Cys-174, His-313, and His-353 each act as for beta-ketoacyl synthase activity in the active site. A malonyl-CoA:ACP transacylase (MAT) domain region spans residues 547 to 875 (VFTGQGAQYA…NYLPSLLRGT (329 aa)). Catalysis depends on Ser-635, which acts as the For malonyltransferase activity. The interval 942 to 1074 (HALIGRKAPS…GKIEPEIADL (133 aa)) is N-terminal hotdog fold. A dehydratase (DH) domain region spans residues 942-1253 (HALIGRKAPS…TFRTVSSADD (312 aa)). Residues 942–1254 (HALIGRKAPS…FRTVSSADDQ (313 aa)) enclose the PKS/mFAS DH domain. His-974 (proton acceptor; for dehydratase activity) is an active-site residue. The segment at 1092-1254 (AGVIEHDMDN…FRTVSSADDQ (163 aa)) is C-terminal hotdog fold. The active-site Proton donor; for dehydratase activity is Asp-1161. Residues 1407–1600 (SKIIGYLTEN…IPTNYRTDNP (194 aa)) form a methyltransferase (CMet) domain region. An enoylreductase (ER) domain region spans residues 1816–2127 (GSPDTIYFRR…SRDHIGRLVV (312 aa)). The interval 2152–2327 (ATYLVAGGTR…YTVSIGLPVV (176 aa)) is ketoreductase (KR) domain. Positions 2433–2510 (DPLTGLIEAL…ALAVNILAQR (78 aa)) constitute a Carrier domain. Ser-2470 is subject to O-(pantetheine 4'-phosphoryl)serine.

It participates in mycotoxin biosynthesis. Functionally, highly reducing polyketide synthase; part of the gene cluster that mediates the biosynthesis of the host-selective toxins (HSTs) ACR-toxins responsible for brown spot of rough lemon disease by the rough lemon pathotype. ACR-toxins cause uncoupling of mitochondrial oxidative-phosphorylation similar to that of classic protonophore. The structure of the major form of ACR-toxin (ACR-toxin I) consists of an alpha-dihydropyrone ring in a 19-carbon polyalcohol, a typical polyketide structure. Minor toxins were characterized as having a pyrone ring with polyalcohol side chains different in length and showing weaker toxicity. The highly reducing polyketide synthase ACRTS2 has all necessary enzymatic domains for multiple cycles of condensation and beta-keto processing. The cytochrome P450 monooxygenase ACRTS1 has also been shown to be essential for ACR-toxin biosynthesis, however its exact role in the pathway has not been elucidated yet. This is Highly reducing polyketide synthase ACRTS2 from Alternaria alternata (Alternaria rot fungus).